The sequence spans 230 residues: Octanoyltransferase (230 aa).

The region spanning 38-215 (AGGADTLLLL…AVCAALDGVL (178 aa)) is the BPL/LPL catalytic domain. Residues 76–83 (RGGKITWH), 145–147 (AIG), and 158–160 (GFA) contribute to the substrate site. Catalysis depends on Cys176, which acts as the Acyl-thioester intermediate.

The protein belongs to the LipB family.

Its subcellular location is the cytoplasm. It carries out the reaction octanoyl-[ACP] + L-lysyl-[protein] = N(6)-octanoyl-L-lysyl-[protein] + holo-[ACP] + H(+). The protein operates within protein modification; protein lipoylation via endogenous pathway; protein N(6)-(lipoyl)lysine from octanoyl-[acyl-carrier-protein]: step 1/2. Functionally, catalyzes the transfer of endogenously produced octanoic acid from octanoyl-acyl-carrier-protein onto the lipoyl domains of lipoate-dependent enzymes. Lipoyl-ACP can also act as a substrate although octanoyl-ACP is likely to be the physiological substrate. The protein is Octanoyltransferase of Mycobacterium tuberculosis (strain ATCC 25177 / H37Ra).